We begin with the raw amino-acid sequence, 1151 residues long: UDP-N-acetylglucosamine--peptide N-acetylglucosaminyltransferase (1151 aa).

TPR repeat units lie at residues 125–158, 193–226, 227–260, 261–294, 295–328, 329–362, 363–396, 397–430, 431–464, 465–498, 499–532, and 533–566; these read LKKV…DPNN, AEAY…KPEF, IDAY…NPDL, YCVR…QPQF, AVAW…DPNF, LDAY…SGNH, AVVH…QPHF, PDAY…CPTH, ADSQ…YPEF, AAAH…APTF, ADAY…NPAF, and ADAH…KPDF. One copy of the TPR 13; truncated repeat lies at 567–577; the sequence is PDAYCNLAHCH. Positions 591 to 607 match the Nuclear localization signal motif; sequence RKLVQIVEDQLCKKRLP. The Proton acceptor role is filled by His612. UDP-binding positions include Gln954, Lys957, 1010 to 1013, 1016 to 1019, 1034 to 1036, and Asp1040; these read VAAK, HVRR, and GHT.

It belongs to the glycosyltransferase 41 family. O-GlcNAc transferase subfamily.

Its subcellular location is the nucleus. The protein localises to the cytoplasm. The protein resides in the perinuclear region. The catalysed reaction is L-seryl-[protein] + UDP-N-acetyl-alpha-D-glucosamine = 3-O-(N-acetyl-beta-D-glucosaminyl)-L-seryl-[protein] + UDP + H(+). It carries out the reaction L-threonyl-[protein] + UDP-N-acetyl-alpha-D-glucosamine = 3-O-(N-acetyl-beta-D-glucosaminyl)-L-threonyl-[protein] + UDP + H(+). It functions in the pathway protein modification; protein glycosylation. Its function is as follows. Addition of nucleotide-activated sugars directly onto the polypeptide through O-glycosidic linkage with the hydroxyl of serine or threonine. Influences tap habituation in the mechanosensory neurons cell autonomously. The sequence is that of UDP-N-acetylglucosamine--peptide N-acetylglucosaminyltransferase (ogt-1) from Caenorhabditis elegans.